The sequence spans 474 residues: Cyclin-dependent kinase 18 (474 aa).

Residues Ser-14, Ser-74, Ser-89, Ser-98, Ser-117, and Ser-132 each carry the phosphoserine modification. Residues 44 to 87 form a disordered region; the sequence is DLQLGPLGRDPLQECSTFSPTDSGEEPGQLSPGVQFQRRQNQRR. The Protein kinase domain occupies 144–425; sequence YVKLDKLGEG…AEAALSHPYF (282 aa). Residues 150 to 158 and Lys-173 contribute to the ATP site; that span reads LGEGTYATV. Asp-265 acts as the Proton acceptor in catalysis. 2 positions are modified to phosphoserine: Ser-440 and Ser-443.

Belongs to the protein kinase superfamily. CMGC Ser/Thr protein kinase family. CDC2/CDKX subfamily.

It catalyses the reaction L-seryl-[protein] + ATP = O-phospho-L-seryl-[protein] + ADP + H(+). The enzyme catalyses L-threonyl-[protein] + ATP = O-phospho-L-threonyl-[protein] + ADP + H(+). May play a role in signal transduction cascades in terminally differentiated cells. This is Cyclin-dependent kinase 18 (CDK18) from Pongo abelii (Sumatran orangutan).